The sequence spans 180 residues: MAKIGLFFGSNTGKTRKVAKSIKKRFDDETMSDAVNVNRVSAEDFAQYQFLILGTPTLGEGELPGLSSDCENESWEEFLPKIEGLDFSGKTVALFGLGDQVGYPENFLDAMGELHSFFTERGAKVVGAWSTDGYEFEGSTAVVDGKFVGLALDLDNQSGKTDERVAAWLAQIAPEFGLSL.

Residues 4-173 (IGLFFGSNTG…RVAAWLAQIA (170 aa)) enclose the Flavodoxin-like domain.

Belongs to the flavodoxin family. Requires FMN as cofactor.

In terms of biological role, low-potential electron donor to a number of redox enzymes. NifF is the electron donor to nitrogenase. This Azotobacter chroococcum mcd 1 protein is Flavodoxin B (nifF).